The following is a 440-amino-acid chain: Xylose isomerase (440 aa).

Catalysis depends on residues His100 and Asp103. Positions 231, 267, 270, 295, 306, 308, and 338 each coordinate Mg(2+).

The protein belongs to the xylose isomerase family. As to quaternary structure, homotetramer. Requires Mg(2+) as cofactor.

The protein resides in the cytoplasm. It carries out the reaction alpha-D-xylose = alpha-D-xylulofuranose. This Burkholderia cenocepacia (strain HI2424) protein is Xylose isomerase.